The sequence spans 313 residues: Serine/threonine-protein phosphatase PP2A-4 catalytic subunit (313 aa).

4 residues coordinate Mn(2+): Asp-61, His-63, Asp-89, and Asn-121. The active-site Proton donor is His-122. Mn(2+) is bound by residues His-171 and His-245. Residue Leu-313 is modified to Leucine methyl ester.

This sequence belongs to the PPP phosphatase family. PP-2A subfamily. PP2A consists of a common heterodimeric core enzyme, composed of a 36 kDa catalytic subunit (subunit C) and a 65 kDa constant regulatory subunit (subunit A), that associates with a variety of regulatory subunits such as subunits B (the R2/B/PR55/B55, R3/B''/PR72/PR130/PR59 and R5/B'/B56 families). Interacts with SIC/RON3. Mn(2+) is required as a cofactor. Reversibly methyl esterified on Leu-313 by leucine carboxyl methyltransferase 1 (LCMT1) and pectin methylesterase 1 (PME1). Carboxyl methylation influences the affinity of the catalytic subunit for the different regulatory subunits, thereby modulating the PP2A holoenzyme's substrate specificity, enzyme activity and cellular localization. Post-translationally, phosphorylation of either threonine (by autophosphorylation-activated protein kinase) or tyrosine results in inactivation of the phosphatase. Auto-dephosphorylation has been suggested as a mechanism for reactivation.

It localises to the cytoplasm. It carries out the reaction O-phospho-L-seryl-[protein] + H2O = L-seryl-[protein] + phosphate. The enzyme catalyses O-phospho-L-threonyl-[protein] + H2O = L-threonyl-[protein] + phosphate. Functionally, functions redundantly with PP2A3, and is involved in establishing auxin gradients, apical-basal axis of polarity and root and shoot apical meristem during embryogenesis. May dephosphorylate PIN1 and regulate its subcellular distribution for polar auxin transport. The holoenzyme composed of PP2AA1, PP2A4 and B'ZETA or B'ETA acts as a negative regulator of plant innate immunity by controlling BAK1 phosphorylation state and activation in surface-localized immune receptor complexes. This chain is Serine/threonine-protein phosphatase PP2A-4 catalytic subunit, found in Arabidopsis thaliana (Mouse-ear cress).